The primary structure comprises 682 residues: Serine/threonine-protein kinase PAK 6 (682 aa).

4 disordered regions span residues 1-30 (MFRKKKKKRPEISAPQNFQHRVHTSFDPKE), 132-170 (SPQSEHTDPHGLYLSCNGGTPAGHRQVPWPEPQSPQALP), 200-256 (LQSS…QESS), and 270-367 (PATG…NLYL). Residues 12–25 (ISAPQNFQHRVHTS) enclose the CRIB domain. The interval 26 to 407 (FDPKEGKFVG…VVDQGDPRLL (382 aa)) is linker. Composition is skewed to polar residues over residues 270–279 (PATGAASSSK) and 297–334 (KDSSSNLVAKAQSLPSEQPMGTFSPLTTSDTSSPQKSL). Residues 408–659 (LDSYVKIGEG…AQELLDHPFL (252 aa)) form the Protein kinase domain. Residues 414 to 422 (IGEGSTGIV) and K437 contribute to the ATP site. D527 serves as the catalytic Proton acceptor. S561 is subject to Phosphoserine; by autocatalysis.

The protein belongs to the protein kinase superfamily. STE Ser/Thr protein kinase family. STE20 subfamily. In terms of assembly, interacts tightly with GTP-bound but not GDP-bound CDC42/p21 and RAC1. Interacts with the androgen receptor AR. Interacts with IQGAP1 and PPM1B. In terms of processing, autophosphorylated. Phosphorylated by MAP2K6/MAPKK6, leading to PAK6 activation.

It is found in the cytoplasm. It localises to the nucleus. It catalyses the reaction L-seryl-[protein] + ATP = O-phospho-L-seryl-[protein] + ADP + H(+). The enzyme catalyses L-threonyl-[protein] + ATP = O-phospho-L-threonyl-[protein] + ADP + H(+). Serine/threonine protein kinase that plays a role in the regulation of gene transcription. The kinase activity is induced by various effectors including AR or MAP2K6/MAPKK6. Phosphorylates the DNA-binding domain of androgen receptor/AR and thereby inhibits AR-mediated transcription. Also inhibits ESR1-mediated transcription. May play a role in cytoskeleton regulation by interacting with IQGAP1. May protect cells from apoptosis through phosphorylation of BAD. This chain is Serine/threonine-protein kinase PAK 6 (Pak6), found in Mus musculus (Mouse).